Here is a 420-residue protein sequence, read N- to C-terminus: Putative epoxide hydrolase (420 aa).

The protein belongs to the peptidase S33 family.

The protein operates within mycotoxin biosynthesis. Its function is as follows. Putative epoxide hydrolase; part of the fragmented gene cluster that mediates the biosynthesis of dothistromin (DOTH), a polyketide toxin very similar in structure to the aflatoxin precursor, versicolorin B. The first step of the pathway is the conversion of acetate to norsolorinic acid (NOR) and requires the fatty acid synthase subunits hexA and hexB, as well as the polyketide synthase pksA. PksA combines a hexanoyl starter unit and 7 malonyl-CoA extender units to synthesize the precursor NOR. The hexanoyl starter unit is provided to the acyl-carrier protein (ACP) domain by the fungal fatty acid synthase hexA/hexB. The second step is the conversion of NOR to averantin (AVN) and requires the norsolorinic acid ketoreductase nor1, which catalyzes the dehydration of norsolorinic acid to form (1'S)-averantin. The cytochrome P450 monooxygenase avnA then catalyzes the hydroxylation of AVN to 5'hydroxyaverantin (HAVN). The next step is performed by adhA that transforms HAVN to averufin (AVF). Averufin might then be converted to hydroxyversicolorone by cypX and avfA. Hydroxyversicolorone is further converted versiconal hemiacetal acetate (VHA) by moxY. VHA is then the substrate for the versiconal hemiacetal acetate esterase est1 to yield versiconal (VAL). Versicolorin B synthase vbsA then converts VAL to versicolorin B (VERB) by closing the bisfuran ring. Then, the activity of the versicolorin B desaturase verB leads to versicolorin A (VERA). DotB, a predicted chloroperoxidase, may perform epoxidation of the A-ring of VERA. Alternatively, a cytochrome P450, such as cypX or avnA could catalyze this step. It is also possible that another, uncharacterized, cytochrome P450 enzyme is responsible for this step. Opening of the epoxide could potentially be achieved by the epoxide hydrolase epoA. However, epoA seems not to be required for DOTH biosynthesis, but other epoxide hydrolases may have the ability to complement this hydrolysis. Alternatively, opening of the epoxide ring could be achieved non-enzymatically. The next step is the deoxygenation of ring A to yield the 5,8-dihydroxyanthraquinone which is most likely catalyzed by the NADPH dehydrogenase encoded by ver1. The last stages of DOTH biosynthesis are proposed to involve hydroxylation of the bisfuran. OrdB and norB might have oxidative roles here. An alternative possibility is that cytochrome P450 monoogenases such as avnA and cypX might perform these steps in addition to previously proposed steps. This chain is Putative epoxide hydrolase, found in Dothistroma septosporum (Red band needle blight fungus).